Consider the following 185-residue polypeptide: Ribosome-recycling factor (185 aa).

The protein belongs to the RRF family.

It localises to the cytoplasm. In terms of biological role, responsible for the release of ribosomes from messenger RNA at the termination of protein biosynthesis. May increase the efficiency of translation by recycling ribosomes from one round of translation to another. The chain is Ribosome-recycling factor from Geobacter sp. (strain M21).